The sequence spans 138 residues: Small ribosomal subunit protein uS11 (138 aa).

Over residues 1–12 (MPPKKANAAGPK) the composition is skewed to low complexity. Positions 1-23 (MPPKKANAAGPKKGQKTRKREKK) are disordered. Positions 13-22 (KGQKTRKREK) are enriched in basic residues.

This sequence belongs to the universal ribosomal protein uS11 family. Part of the 30S ribosomal subunit. Interacts with proteins S7 and S18. Binds to IF-3.

Functionally, located on the platform of the 30S subunit, it bridges several disparate RNA helices of the 16S rRNA. Forms part of the Shine-Dalgarno cleft in the 70S ribosome. The polypeptide is Small ribosomal subunit protein uS11 (Mycobacterium leprae (strain Br4923)).